Consider the following 435-residue polypeptide: Hydrogenobyrinate a,c-diamide synthase (435 aa).

The GATase cobBQ-type domain occupies 247–435 (RIALARDAAF…TGSFFHLIAG (189 aa)). Cysteine 329 functions as the Nucleophile in the catalytic mechanism.

This sequence belongs to the CobB/CbiA family. Requires Mg(2+) as cofactor.

The enzyme catalyses hydrogenobyrinate + 2 L-glutamine + 2 ATP + 2 H2O = hydrogenobyrinate a,c-diamide + 2 L-glutamate + 2 ADP + 2 phosphate + 2 H(+). It participates in cofactor biosynthesis; adenosylcobalamin biosynthesis; cob(II)yrinate a,c-diamide from precorrin-2 (aerobic route): step 9/10. In terms of biological role, catalyzes the ATP-dependent amidation of the two carboxylate groups at positions a and c of hydrogenobyrinate, using either L-glutamine or ammonia as the nitrogen source. The chain is Hydrogenobyrinate a,c-diamide synthase from Rhodobacter capsulatus (strain ATCC BAA-309 / NBRC 16581 / SB1003).